The primary structure comprises 462 residues: Cysteine--tRNA ligase (462 aa).

C29 is a Zn(2+) binding site. The short motif at 31-41 (MTVYDLCHLGH) is the 'HIGH' region element. Zn(2+) is bound by residues C217, H242, and E246. Residues 274-278 (KMSKS) carry the 'KMSKS' region motif. Residue K277 coordinates ATP.

This sequence belongs to the class-I aminoacyl-tRNA synthetase family. Monomer. It depends on Zn(2+) as a cofactor.

Its subcellular location is the cytoplasm. It carries out the reaction tRNA(Cys) + L-cysteine + ATP = L-cysteinyl-tRNA(Cys) + AMP + diphosphate. The polypeptide is Cysteine--tRNA ligase (Polaromonas sp. (strain JS666 / ATCC BAA-500)).